We begin with the raw amino-acid sequence, 392 residues long: Homoserine O-acetyltransferase (392 aa).

The region spanning 52–356 (NVVVVLHALT…ICGHDGFLVE (305 aa)) is the AB hydrolase-1 domain. Serine 157 serves as the catalytic Nucleophile. Residue arginine 227 coordinates substrate. Active-site residues include aspartate 320 and histidine 350. Aspartate 351 serves as a coordination point for substrate. The interval 373–392 (SQSAGPGGAGPGSRKGTTRR) is disordered.

The protein belongs to the AB hydrolase superfamily. MetX family. As to quaternary structure, homodimer.

The protein resides in the cytoplasm. It carries out the reaction L-homoserine + acetyl-CoA = O-acetyl-L-homoserine + CoA. It participates in amino-acid biosynthesis; L-methionine biosynthesis via de novo pathway; O-acetyl-L-homoserine from L-homoserine: step 1/1. Transfers an acetyl group from acetyl-CoA to L-homoserine, forming acetyl-L-homoserine. The polypeptide is Homoserine O-acetyltransferase (Mycobacterium avium (strain 104)).